The sequence spans 277 residues: Carbonyl reductase [NADPH] 1 (277 aa).

Residue Ser-2 is modified to N-acetylserine. Residues Ser-2 and Ser-30 each carry the phosphoserine modification. Residues 10-34, 63-64, and Asn-90 each bind NADP(+); these read VTGA…GDVV and DI. Glutathione-binding positions include 95–97 and Gln-106; that span reads FKT. Ser-140 is a substrate binding site. 193 to 194 serves as a coordination point for glutathione; the sequence is AY. The active-site Proton acceptor is the Tyr-194. NADP(+)-binding positions include 194 to 198 and 231 to 233; these read YGVTK and VRT. Lys-239 carries the post-translational modification N6-1-carboxyethyl lysine.

This sequence belongs to the short-chain dehydrogenases/reductases (SDR) family. In terms of assembly, monomer.

The protein localises to the cytoplasm. It catalyses the reaction a secondary alcohol + NADP(+) = a ketone + NADPH + H(+). The catalysed reaction is prostaglandin F2alpha + NADP(+) = prostaglandin E2 + NADPH + H(+). The enzyme catalyses prostaglandin E1 + NADP(+) = 15-oxoprostaglandin E1 + NADPH + H(+). It carries out the reaction menadione + NADPH + H(+) = menadiol + NADP(+). It catalyses the reaction prostaglandin D2 + NADP(+) = 15-oxoprostaglandin D2 + NADPH + H(+). The catalysed reaction is prostaglandin E2 + NADP(+) = 15-oxoprostaglandin E2 + NADPH + H(+). The enzyme catalyses prostaglandin F2alpha + NADP(+) = 15-oxoprostaglandin F2alpha + NADPH + H(+). It carries out the reaction daunorubicin + NADPH + H(+) = 13-dihydrodaunorubicin + NADP(+). It catalyses the reaction S-nitrosoglutathione + NADPH + H(+) = S-(hydroxysulfenamide)glutathione + NADP(+). The catalysed reaction is a primary alcohol + NADP(+) = an aldehyde + NADPH + H(+). The enzyme catalyses cortisol + NADPH + H(+) = 20beta-dihydrocortisol + NADP(+). It carries out the reaction corticosterone + NADPH + H(+) = 20beta-dihydrocorticosterone + NADP(+). In terms of biological role, NADPH-dependent reductase with broad substrate specificity. Catalyzes the reduction of a wide variety of carbonyl compounds including quinones, prostaglandins, menadione, plus various xenobiotics. Catalyzes the reduction of the antitumor anthracyclines doxorubicin and daunorubicin to the cardiotoxic compounds doxorubicinol and daunorubicinol. Can convert prostaglandin E to prostaglandin F2-alpha. Can bind glutathione, which explains its higher affinity for glutathione-conjugated substrates. Catalyzes the reduction of S-nitrosoglutathione. In addition, participates in the glucocorticoid metabolism by catalyzing the NADPH-dependent cortisol/corticosterone into 20beta-dihydrocortisol (20b-DHF) or 20beta-corticosterone (20b-DHB), which are weak agonists of NR3C1 and NR3C2 in adipose tissue. This is Carbonyl reductase [NADPH] 1 from Bos taurus (Bovine).